The sequence spans 305 residues: Cysteine synthase (305 aa).

N6-(pyridoxal phosphate)lysine is present on lysine 45. Pyridoxal 5'-phosphate is bound by residues asparagine 75, 179-183, and serine 266; that span reads GSGGT.

The protein belongs to the cysteine synthase/cystathionine beta-synthase family. In terms of assembly, homodimer. The cofactor is pyridoxal 5'-phosphate.

It catalyses the reaction O-acetyl-L-serine + hydrogen sulfide = L-cysteine + acetate. It participates in amino-acid biosynthesis; L-cysteine biosynthesis; L-cysteine from L-serine: step 2/2. In Helicobacter pylori (strain J99 / ATCC 700824) (Campylobacter pylori J99), this protein is Cysteine synthase (cysM).